We begin with the raw amino-acid sequence, 214 residues long: Large ribosomal subunit protein uL16 (214 aa).

Arginine 32 bears the Citrulline mark. Lysine 175 is covalently cross-linked (Glycyl lysine isopeptide (Lys-Gly) (interchain with G-Cter in SUMO2)). Lysine 188 participates in a covalent cross-link: Glycyl lysine isopeptide (Lys-Gly) (interchain with G-Cter in ubiquitin).

The protein belongs to the universal ribosomal protein uL16 family. Component of the large ribosomal subunit. Mature ribosomes consist of a small (40S) and a large (60S) subunit. The 40S subunit contains about 33 different proteins and 1 molecule of RNA (18S). The 60S subunit contains about 49 different proteins and 3 molecules of RNA (28S, 5.8S and 5S). Post-translationally, citrullinated by PADI4. In terms of processing, ufmylated by UFL1.

The protein localises to the cytoplasm. Functionally, component of the large ribosomal subunit. Plays a role in the formation of actively translating ribosomes. May play a role in the embryonic brain development. In Oryctolagus cuniculus (Rabbit), this protein is Large ribosomal subunit protein uL16 (RPL10).